The following is a 120-amino-acid chain: Large ribosomal subunit protein bL20c (120 aa).

Belongs to the bacterial ribosomal protein bL20 family.

Its subcellular location is the plastid. Binds directly to 23S ribosomal RNA and is necessary for the in vitro assembly process of the 50S ribosomal subunit. It is not involved in the protein synthesizing functions of that subunit. This is Large ribosomal subunit protein bL20c from Cuscuta obtusiflora (Peruvian dodder).